A 372-amino-acid polypeptide reads, in one-letter code: tRNA-specific 2-thiouridylase MnmA (372 aa).

ATP-binding positions include 9–16 (GMSGGVDS) and Met-35. Residues 95 to 97 (NPD) are interaction with target base in tRNA. The Nucleophile role is filled by Cys-100. Residues Cys-100 and Cys-201 are joined by a disulfide bond. Gly-124 is an ATP binding site. The segment at 151–153 (KDQ) is interaction with tRNA. The Cysteine persulfide intermediate role is filled by Cys-201. An interaction with tRNA region spans residues 317–318 (RY).

This sequence belongs to the MnmA/TRMU family.

It is found in the cytoplasm. The catalysed reaction is S-sulfanyl-L-cysteinyl-[protein] + uridine(34) in tRNA + AH2 + ATP = 2-thiouridine(34) in tRNA + L-cysteinyl-[protein] + A + AMP + diphosphate + H(+). Functionally, catalyzes the 2-thiolation of uridine at the wobble position (U34) of tRNA, leading to the formation of s(2)U34. The protein is tRNA-specific 2-thiouridylase MnmA of Janthinobacterium sp. (strain Marseille) (Minibacterium massiliensis).